Consider the following 764-residue polypeptide: Tyrosine-protein phosphatase corkscrew (764 aa).

In terms of domain architecture, SH2 spans 1–95; it reads WFHGNLSGKE…GTVVHLRQPF (95 aa). In terms of domain architecture, Tyrosine-protein phosphatase spans 117–522; that stretch reads FWEEFESLQQ…KFVYYAVQHY (406 aa). A PTPase insert (Cys/Ser-rich) region spans residues 174-325; that stretch reads IRLPTDGDLY…LNGEGNQFKT (152 aa). A disordered region spans residues 246 to 273; sequence SKHKRSESMSASANASAAGTGPGTPTAA. The segment covering 255 to 273 has biased composition (low complexity); the sequence is SASANASAAGTGPGTPTAA. Residues Asp422, 460–466, and Gln507 each bind substrate; that span reads CSAGIGR. The active-site Phosphocysteine intermediate is Cys460. Residues 599–666 are disordered; the sequence is AAKLQPPLPP…NANGNGNILG (68 aa). Low complexity predominate over residues 612-666; that stretch reads SNNNNSSGNSGSYCNSSSSTSTAQHNGVVSSSNNCSSGSGSANSSNANGNGNILG.

The protein belongs to the protein-tyrosine phosphatase family. Non-receptor class subfamily.

The protein localises to the cytoplasm. It carries out the reaction O-phospho-L-tyrosyl-[protein] + H2O = L-tyrosyl-[protein] + phosphate. Its function is as follows. Required in all receptor tyrosine kinase signaling pathways. Functions downstream of the receptor tyrosine kinase torso, acting in concert with D-Raf via tailless. Also functions downstream of Egfr (epidermal growth factor receptor) and btl (fibroblast growth factor receptor). The SH2 domain suggests that csw effects its role by mediating heteromeric protein interactions. Maternally required for normal determination of cell fates at the termini of the embryo. Required for cell fate specification of the ventral ectoderm, in the developing embryonic CNS and for embryonic tracheal cell migration. Functions during imaginal development for proper formation of adult structures such as eyes, aristae, L5 wing vein and the tarsal claw. The chain is Tyrosine-protein phosphatase corkscrew (csw) from Drosophila virilis (Fruit fly).